We begin with the raw amino-acid sequence, 62 residues long: DNA-directed RNA polymerase subunit Rpo10 (62 aa).

Zn(2+) is bound by residues Cys-6, Cys-9, Cys-43, and Cys-44.

Belongs to the archaeal Rpo10/eukaryotic RPB10 RNA polymerase subunit family. Part of the RNA polymerase complex. Zn(2+) serves as cofactor.

It localises to the cytoplasm. The enzyme catalyses RNA(n) + a ribonucleoside 5'-triphosphate = RNA(n+1) + diphosphate. Functionally, DNA-dependent RNA polymerase (RNAP) catalyzes the transcription of DNA into RNA using the four ribonucleoside triphosphates as substrates. This chain is DNA-directed RNA polymerase subunit Rpo10, found in Methanocorpusculum labreanum (strain ATCC 43576 / DSM 4855 / Z).